Here is a 101-residue protein sequence, read N- to C-terminus: Chaperone modulatory protein CbpM (101 aa).

This sequence belongs to the CbpM family.

In terms of biological role, interacts with CbpA and inhibits both the DnaJ-like co-chaperone activity and the DNA binding activity of CbpA. Together with CbpA, modulates the activity of the DnaK chaperone system. Does not inhibit the co-chaperone activity of DnaJ. The polypeptide is Chaperone modulatory protein CbpM (Pseudomonas putida (strain GB-1)).